A 224-amino-acid chain; its full sequence is PKHD-type hydroxylase Shewana3_0717 (224 aa).

Residues 78–176 (QFYPPLFNRY…RTAAFMWLQS (99 aa)) form the Fe2OG dioxygenase domain. The Fe cation site is built by histidine 96, aspartate 98, and histidine 157. Arginine 167 contributes to the 2-oxoglutarate binding site.

Fe(2+) is required as a cofactor. Requires L-ascorbate as cofactor.

In Shewanella sp. (strain ANA-3), this protein is PKHD-type hydroxylase Shewana3_0717.